We begin with the raw amino-acid sequence, 299 residues long: Probable lipid kinase YegS (299 aa).

Residues 2 to 133 (AEFPASLLIL…IDMAQVNKQT (132 aa)) enclose the DAGKc domain. ATP-binding positions include Thr-40, 66–72 (GDGTINE), and Thr-95. Mg(2+) is bound by residues Leu-215, Asp-218, and Leu-220. Residue Glu-271 is the Proton acceptor of the active site.

The protein belongs to the diacylglycerol/lipid kinase family. YegS lipid kinase subfamily. The cofactor is Mg(2+). Ca(2+) serves as cofactor.

Its subcellular location is the cytoplasm. In terms of biological role, probably phosphorylates lipids; the in vivo substrate is unknown. The chain is Probable lipid kinase YegS from Shigella boydii serotype 18 (strain CDC 3083-94 / BS512).